An 89-amino-acid polypeptide reads, in one-letter code: Small ribosomal subunit protein uS15 (89 aa).

Belongs to the universal ribosomal protein uS15 family. In terms of assembly, part of the 30S ribosomal subunit. Forms a bridge to the 50S subunit in the 70S ribosome, contacting the 23S rRNA.

In terms of biological role, one of the primary rRNA binding proteins, it binds directly to 16S rRNA where it helps nucleate assembly of the platform of the 30S subunit by binding and bridging several RNA helices of the 16S rRNA. Functionally, forms an intersubunit bridge (bridge B4) with the 23S rRNA of the 50S subunit in the ribosome. In Haemophilus influenzae (strain PittGG), this protein is Small ribosomal subunit protein uS15.